The chain runs to 570 residues: Glutamate--tRNA ligase (570 aa).

The short motif at 107-117 is the 'HIGH' region element; it reads PNPDFVLHLGS.

It belongs to the class-I aminoacyl-tRNA synthetase family. Glutamate--tRNA ligase type 2 subfamily.

It localises to the cytoplasm. It catalyses the reaction tRNA(Glu) + L-glutamate + ATP = L-glutamyl-tRNA(Glu) + AMP + diphosphate. Functionally, catalyzes the attachment of glutamate to tRNA(Glu) in a two-step reaction: glutamate is first activated by ATP to form Glu-AMP and then transferred to the acceptor end of tRNA(Glu). This chain is Glutamate--tRNA ligase, found in Pyrobaculum islandicum (strain DSM 4184 / JCM 9189 / GEO3).